The following is a 200-amino-acid chain: Glycerol-3-phosphate acyltransferase (200 aa).

6 consecutive transmembrane segments (helical) span residues 9-29, 54-74, 81-101, 112-132, 140-160, and 165-185; these read IIIG…AYFW, VPGM…VLLA, DIAV…PLWL, GAGA…LVWL, YVSL…ALLN, and YLIF…SNIG.

It belongs to the PlsY family. In terms of assembly, probably interacts with PlsX.

It localises to the cell membrane. The enzyme catalyses an acyl phosphate + sn-glycerol 3-phosphate = a 1-acyl-sn-glycero-3-phosphate + phosphate. Its pathway is lipid metabolism; phospholipid metabolism. In terms of biological role, catalyzes the transfer of an acyl group from acyl-phosphate (acyl-PO(4)) to glycerol-3-phosphate (G3P) to form lysophosphatidic acid (LPA). This enzyme utilizes acyl-phosphate as fatty acyl donor, but not acyl-CoA or acyl-ACP. This chain is Glycerol-3-phosphate acyltransferase, found in Desulforamulus reducens (strain ATCC BAA-1160 / DSM 100696 / MI-1) (Desulfotomaculum reducens).